Here is a 428-residue protein sequence, read N- to C-terminus: MEISTPLDCAPALVGPLPRRNSRAAQIRWGDRVVHVGGDAPVCVQSMTNTDTSDAIGTAIQVKELARAGSELVRITVDTPAAAAAVPAIREQLDRMGVDVPLVGDFHYNGHKLLQDYPECAQALSKYRINPGNVGQGAKRDTQFAQMIEIACRYDKPVRIGVNWGSLDQDLLARIMDENAQRATPWDARAVMVEALITSAIQSAQKAEELGLPGSQIILSCKVSAVQDLIAVYRELARRCHYALHLGLTEAGMGSKGIVASTAALSVLLQEGIGDTIRISLTPEPGAPREKEVIVAQEILQTMGLRNFTPMVIACPGCGRTTSTVFQELAARIQSYLREQMPVWKEQYPGVEEMNVAVMGCIVNGPGESKHANIGISLPGTGESPAAPVFVDGVKVKTLRGERITEEFQAIVDEYVRTHYGAQTPATV.

Residues Cys315, Cys318, Cys361, and Glu368 each coordinate [4Fe-4S] cluster.

This sequence belongs to the IspG family. It depends on [4Fe-4S] cluster as a cofactor.

The enzyme catalyses (2E)-4-hydroxy-3-methylbut-2-enyl diphosphate + oxidized [flavodoxin] + H2O + 2 H(+) = 2-C-methyl-D-erythritol 2,4-cyclic diphosphate + reduced [flavodoxin]. It functions in the pathway isoprenoid biosynthesis; isopentenyl diphosphate biosynthesis via DXP pathway; isopentenyl diphosphate from 1-deoxy-D-xylulose 5-phosphate: step 5/6. Its function is as follows. Converts 2C-methyl-D-erythritol 2,4-cyclodiphosphate (ME-2,4cPP) into 1-hydroxy-2-methyl-2-(E)-butenyl 4-diphosphate. This chain is 4-hydroxy-3-methylbut-2-en-1-yl diphosphate synthase (flavodoxin), found in Ralstonia pickettii (strain 12J).